A 101-amino-acid chain; its full sequence is Urease subunit gamma (101 aa).

This sequence belongs to the urease gamma subunit family. In terms of assembly, heterotrimer of UreA (gamma), UreB (beta) and UreC (alpha) subunits. Three heterotrimers associate to form the active enzyme.

It is found in the cytoplasm. The enzyme catalyses urea + 2 H2O + H(+) = hydrogencarbonate + 2 NH4(+). Its pathway is nitrogen metabolism; urea degradation; CO(2) and NH(3) from urea (urease route): step 1/1. This Ureaplasma urealyticum serovar 10 (strain ATCC 33699 / Western) protein is Urease subunit gamma.